Consider the following 645-residue polypeptide: DNA mismatch repair protein MutL (645 aa).

Belongs to the DNA mismatch repair MutL/HexB family.

This protein is involved in the repair of mismatches in DNA. It is required for dam-dependent methyl-directed DNA mismatch repair. May act as a 'molecular matchmaker', a protein that promotes the formation of a stable complex between two or more DNA-binding proteins in an ATP-dependent manner without itself being part of a final effector complex. The chain is DNA mismatch repair protein MutL from Pediococcus pentosaceus (strain ATCC 25745 / CCUG 21536 / LMG 10740 / 183-1w).